Here is a 336-residue protein sequence, read N- to C-terminus: Inositol 2-dehydrogenase (336 aa).

The protein belongs to the Gfo/Idh/MocA family. Homotetramer.

The catalysed reaction is myo-inositol + NAD(+) = scyllo-inosose + NADH + H(+). Involved in the oxidation of myo-inositol (MI) to 2-keto-myo-inositol (2KMI or 2-inosose). This is Inositol 2-dehydrogenase from Paracoccus denitrificans (strain Pd 1222).